Reading from the N-terminus, the 131-residue chain is MTKKTIYFICTGNSCRSQMAEGWAKQILADDWNVYSAGIETHGVNPKAIEAMKEVGIDISNHTSDLIDNNIIKNSNLVVTLCSDADVNCPSLPTNVKKEHWGFDDPAGKPWSEFQRVRDEIKIAIENFKSR.

Catalysis depends on nucleophile residues Cys10, Cys82, and Cys89. Intrachain disulfides connect Cys10–Cys82 and Cys82–Cys89.

It belongs to the low molecular weight phosphotyrosine protein phosphatase family. Thioredoxin-coupled ArsC subfamily.

It localises to the cytoplasm. It catalyses the reaction arsenate + [thioredoxin]-dithiol + H(+) = arsenite + [thioredoxin]-disulfide + H2O. In terms of biological role, catalyzes the reduction of arsenate [As(V)] to arsenite [As(III)]. This Staphylococcus aureus (strain COL) protein is Arsenate reductase.